Consider the following 235-residue polypeptide: DUP240 protein DFP4 (235 aa).

Residues 1–44 are Cytoplasmic-facing; the sequence is MSSELLISNSKPRPEGLRKLCEGETVILPRDITPSKCAYFLKQN. The chain crosses the membrane as a helical span at residues 45–65; the sequence is IVFISYIFIHIIITIILNRLA. Residues 66–72 are Extracellular-facing; it reads LSAHGNT. A helical membrane pass occupies residues 73–93; the sequence is LIIILAALLITISLFLLLLLP. The Cytoplasmic segment spans residues 94 to 235; it reads YLSCSRYKLR…DKYPEMGVTV (142 aa).

It belongs to the DUP/COS family. In terms of assembly, interacts according to large scale protein interaction studies with BZZ1, SRB4 and SUA7.

It is found in the cell membrane. The polypeptide is DUP240 protein DFP4 (Saccharomyces cerevisiae (strain ATCC 204508 / S288c) (Baker's yeast)).